The chain runs to 425 residues: Palmitoyltransferase ZDHHC23 (425 aa).

Residues 1 to 81 (MKPVKKKKTE…RIPWLRGAKK (81 aa)) lie on the Cytoplasmic side of the membrane. The chain crosses the membrane as a helical span at residues 82–99 (VNISIVPPLVLLPVFLHV). The Lumenal segment spans residues 100–102 (ASW). A helical transmembrane segment spans residues 103–125 (HFLLGVVVLTSLPMLALWYYYLT). The Cytoplasmic portion of the chain corresponds to 126 to 130 (HRRKE). Residues 131-151 (QTLFFLSLGLFSLGYMYYVFL) form a helical membrane-spanning segment. Topologically, residues 152–159 (REVVPQGR) are lumenal. Residues 160 to 180 (VGPTQLALLTCGLLLILLALY) traverse the membrane as a helical segment. The Cytoplasmic segment spans residues 181 to 292 (RAKKNPGYLS…NSCVGESNHQ (112 aa)). A DHHC domain is found at 249 to 299 (DWCAKCQLVRPARAWHCRICGICVRRMDHHCVWINSCVGESNHQAFILALS). Cysteine 279 acts as the S-palmitoyl cysteine intermediate in catalysis. The helical transmembrane segment at 293–313 (AFILALSIFLLTSVYGISLTL) threads the bilayer. Residues 314–343 (NTICRDRSLFTALFYCPGVYANYSSALSFT) lie on the Lumenal side of the membrane. Residues 344–364 (CVWYSVIITAGMAYIFLIQLI) traverse the membrane as a helical segment. Residues 365–425 (NISYNVTERE…TVHTPAEDIV (61 aa)) are Cytoplasmic-facing. The interval 422-425 (EDIV) is interaction with NOS1.

Belongs to the DHHC palmitoyltransferase family. In terms of assembly, interacts with NOS1. Expressed in the brain.

The protein resides in the golgi apparatus membrane. The protein localises to the golgi apparatus. It is found in the trans-Golgi network membrane. The catalysed reaction is L-cysteinyl-[protein] + hexadecanoyl-CoA = S-hexadecanoyl-L-cysteinyl-[protein] + CoA. In terms of biological role, palmitoyltransferase that could catalyze the addition of palmitate onto various protein substrates and be involved in a variety of cellular processes. Palmitoyltransferase that mediates palmitoylation of KCNMA1, regulating localization of KCNMA1 to the plasma membrane. May be involved in NOS1 regulation and targeting to the synaptic membrane. This is Palmitoyltransferase ZDHHC23 from Mus musculus (Mouse).